The primary structure comprises 796 residues: Endonuclease MutS2 (796 aa).

339-346 contacts ATP; that stretch reads GPNTGGKT. The interval 620–644 is disordered; that stretch reads EKLGDTDSSLVSKAKKNRKQHKPSD. In terms of domain architecture, Smr spans 721–796; the sequence is LNIIGKRVDE…DHGVTIVEFK (76 aa).

It belongs to the DNA mismatch repair MutS family. MutS2 subfamily. Homodimer. Binds to stalled ribosomes, contacting rRNA.

Functionally, endonuclease that is involved in the suppression of homologous recombination and thus may have a key role in the control of bacterial genetic diversity. In terms of biological role, acts as a ribosome collision sensor, splitting the ribosome into its 2 subunits. Detects stalled/collided 70S ribosomes which it binds and splits by an ATP-hydrolysis driven conformational change. Acts upstream of the ribosome quality control system (RQC), a ribosome-associated complex that mediates the extraction of incompletely synthesized nascent chains from stalled ribosomes and their subsequent degradation. Probably generates substrates for RQC. The chain is Endonuclease MutS2 from Lachnoclostridium phytofermentans (strain ATCC 700394 / DSM 18823 / ISDg) (Clostridium phytofermentans).